The following is a 298-amino-acid chain: uncharacterized protein (298 aa).

In terms of domain architecture, HTH lysR-type spans 5 to 62; it reads TSLSAMRIFEAAARLGSFRAAAEELNLSPSAVSHAIMRLERDLGVALFERTTRSVSLT. Positions 22 to 42 form a DNA-binding region, H-T-H motif; it reads FRAAAEELNLSPSAVSHAIMR.

It belongs to the LysR transcriptional regulatory family.

This is an uncharacterized protein from Sinorhizobium fredii (strain NBRC 101917 / NGR234).